The sequence spans 224 residues: tRNA (guanine-N(7)-)-methyltransferase (224 aa).

E54, E79, E106, and D129 together coordinate S-adenosyl-L-methionine. D129 is an active-site residue. Positions 133 and 165 each coordinate substrate.

The protein belongs to the class I-like SAM-binding methyltransferase superfamily. TrmB family.

It carries out the reaction guanosine(46) in tRNA + S-adenosyl-L-methionine = N(7)-methylguanosine(46) in tRNA + S-adenosyl-L-homocysteine. It functions in the pathway tRNA modification; N(7)-methylguanine-tRNA biosynthesis. Catalyzes the formation of N(7)-methylguanine at position 46 (m7G46) in tRNA. In Chlamydia trachomatis serovar D (strain ATCC VR-885 / DSM 19411 / UW-3/Cx), this protein is tRNA (guanine-N(7)-)-methyltransferase.